Reading from the N-terminus, the 343-residue chain is MTNFYKVCLAVFILVCCNISHAAVSFIGSTENDVGPSQGSYSSTHAMDNLPFVYNTGYNIGYQNANVWRISGGFCVGLDGKVDLPVVGSLDGQSIYGLTEEVGLLIWMGDTNYSRGTAMSGNSWENVFSGWCVGNYVSTQGLSVHVRPVILKRNSSAQYSVQKTSIGSIRMRPYNGSSAGSVQTTVNFSLNPFTLNDTVTSCRLLTPSAVNVSLAAISAGQLPSSGDEVVAGTTSLKLQCDAGVTVWATLTDATTPSNRSDILTLTGASTATGVGLRIYKNTDSTPLKFGPDSPVKGNENQWQLSTGTETSPSVRLYVKYVNTGEGINPGTVNGISTFTFSYQ.

Residues 1 to 22 (MTNFYKVCLAVFILVCCNISHA) form the signal peptide. The tract at residues 23 to 199 (AVSFIGSTEN…LNPFTLNDTV (177 aa)) is receptor-binding lectin domain. Residues 65 to 66 (AN), 110 to 111 (DT), and 138 to 141 (STQG) contribute to the a carbohydrate site. Cys-75 and Cys-132 form a disulfide bridge. The segment at 200 to 343 (TSCRLLTPSA…GISTFTFSYQ (144 aa)) is fimbrillin-binding domain. The disordered stretch occupies residues 287–307 (LKFGPDSPVKGNENQWQLSTG). The segment covering 298 to 307 (NENQWQLSTG) has biased composition (polar residues).

It belongs to the fimbrial protein family.

Its subcellular location is the fimbrium. In terms of biological role, essential fimbrial adhesion factor that mediates binding to N-acetylglucosamine-containing receptors in the host intestinal microvilli, leading to colonization of the intestinal tissue, and diarrhea or septicemia. Also confers adhesiveness to laminin and basement membranes. May be involved in the initiation of polymerization of fimbrillin monomers during fimbrial filament biogenesis. The chain is F17g-G fimbrial adhesin (f17gG) from Escherichia coli.